The sequence spans 84 residues: Alpha-mammal toxin Aah3 (84 aa).

Positions 1 to 19 (MNYLVMISLALLLMTGVES) are cleaved as a signal peptide. Residues 21 to 82 (RDGYIVDSKN…PIKDPSYKCH (62 aa)) enclose the LCN-type CS-alpha/beta domain. Intrachain disulfides connect C31–C81, C35–C53, C39–C63, and C43–C65. Residue R84 is a propeptide, removed by a carboxypeptidase.

It belongs to the long (4 C-C) scorpion toxin superfamily. Sodium channel inhibitor family. Alpha subfamily. Expressed by the venom gland.

It is found in the secreted. Its function is as follows. Alpha toxins bind voltage-independently at site-3 of sodium channels (Nav) and inhibit the inactivation of the activated channels, thereby blocking neuronal transmission. The sequence is that of Alpha-mammal toxin Aah3 from Androctonus australis (Sahara scorpion).